A 377-amino-acid chain; its full sequence is Protein RecA (377 aa).

G66 to T73 is an ATP binding site. The interval V329 to S377 is disordered. Low complexity predominate over residues A342 to S377.

This sequence belongs to the RecA family.

It is found in the cytoplasm. Functionally, can catalyze the hydrolysis of ATP in the presence of single-stranded DNA, the ATP-dependent uptake of single-stranded DNA by duplex DNA, and the ATP-dependent hybridization of homologous single-stranded DNAs. It interacts with LexA causing its activation and leading to its autocatalytic cleavage. The sequence is that of Protein RecA from Streptomyces avermitilis (strain ATCC 31267 / DSM 46492 / JCM 5070 / NBRC 14893 / NCIMB 12804 / NRRL 8165 / MA-4680).